The chain runs to 118 residues: Large ribosomal subunit protein uL18 (118 aa).

It belongs to the universal ribosomal protein uL18 family. In terms of assembly, part of the 50S ribosomal subunit; part of the 5S rRNA/L5/L18/L25 subcomplex. Contacts the 5S and 23S rRNAs.

Its function is as follows. This is one of the proteins that bind and probably mediate the attachment of the 5S RNA into the large ribosomal subunit, where it forms part of the central protuberance. The sequence is that of Large ribosomal subunit protein uL18 from Cupriavidus pinatubonensis (strain JMP 134 / LMG 1197) (Cupriavidus necator (strain JMP 134)).